Reading from the N-terminus, the 155-residue chain is V-type proton ATPase 16 kDa proteolipid subunit c (155 aa).

Over Met-1–Tyr-10 the chain is Lumenal. The helical transmembrane segment at Ala-11–Gly-33 threads the bilayer. The Cytoplasmic portion of the chain corresponds to Thr-34–Ser-55. A helical membrane pass occupies residues Ile-56 to Ile-76. At Ala-77–Gln-92 the chain is on the lumenal side. Residues Leu-93–Gly-114 form a helical membrane-spanning segment. The Cytoplasmic portion of the chain corresponds to Asp-115–Met-131. The helical transmembrane segment at Ile-132–Leu-152 threads the bilayer. Residues Ser-153–Lys-155 are Lumenal-facing.

It belongs to the V-ATPase proteolipid subunit family. As to quaternary structure, V-ATPase is a heteromultimeric enzyme made up of two complexes: the ATP-hydrolytic V1 complex and the proton translocation V0 complex. The V1 complex consists of three catalytic AB heterodimers that form a heterohexamer, three peripheral stalks each consisting of EG heterodimers, one central rotor including subunits D and F, and the regulatory subunits C and H. The proton translocation complex V0 consists of the proton transport subunit a, a ring of proteolipid subunits c9c'', rotary subunit d, subunits e and f, and the accessory subunits ATP6AP1/Ac45 and ATP6AP2/PRR. Interacts with the V0 complex V-ATPase subunit a4 ATP6V0A4. Interacts with LASS2. Interacts with RNF182; this interaction leads to ubiquitination and degradation via the proteasome pathway. Ubiquitinated by RNF182, leading to its degradation via the ubiquitin-proteasome pathway. In terms of tissue distribution, expressed in brain (at protein level).

The protein resides in the cytoplasmic vesicle. The protein localises to the clathrin-coated vesicle membrane. It localises to the secretory vesicle. It is found in the synaptic vesicle membrane. Its function is as follows. Proton-conducting pore forming subunit of the V0 complex of vacuolar(H+)-ATPase (V-ATPase), a multisubunit enzyme composed of a peripheral complex (V1) that hydrolyzes ATP and a membrane integral complex (V0) that translocates protons. V-ATPase is responsible for acidifying and maintaining the pH of intracellular compartments and in some cell types, is targeted to the plasma membrane, where it is responsible for acidifying the extracellular environment. The protein is V-type proton ATPase 16 kDa proteolipid subunit c (ATP6V0C) of Bos taurus (Bovine).